The chain runs to 114 residues: Iron-sulfur cluster insertion protein ErpA (114 aa).

Cys42, Cys106, and Cys108 together coordinate iron-sulfur cluster.

The protein belongs to the HesB/IscA family. As to quaternary structure, homodimer. Requires iron-sulfur cluster as cofactor.

Functionally, required for insertion of 4Fe-4S clusters for at least IspG. The protein is Iron-sulfur cluster insertion protein ErpA of Haemophilus influenzae (strain PittEE).